Reading from the N-terminus, the 379-residue chain is Cobalt-precorrin-5B C(1)-methyltransferase (379 aa).

This sequence belongs to the CbiD family.

It carries out the reaction Co-precorrin-5B + S-adenosyl-L-methionine = Co-precorrin-6A + S-adenosyl-L-homocysteine. The protein operates within cofactor biosynthesis; adenosylcobalamin biosynthesis; cob(II)yrinate a,c-diamide from sirohydrochlorin (anaerobic route): step 6/10. Catalyzes the methylation of C-1 in cobalt-precorrin-5B to form cobalt-precorrin-6A. This is Cobalt-precorrin-5B C(1)-methyltransferase from Salmonella choleraesuis (strain SC-B67).